A 397-amino-acid chain; its full sequence is Dual specificity mitogen-activated protein kinase kinase 2 (397 aa).

Residues methionine 1–threonine 21 are disordered. Residues phenylalanine 69–isoleucine 366 enclose the Protein kinase domain. Residues leucine 75–valine 83 and lysine 98 contribute to the ATP site. Catalysis depends on aspartate 191, which acts as the Proton acceptor. 2 positions are modified to phosphoserine; by RAF: serine 219 and serine 223. Residues glycine 284–glycine 306 are disordered.

The protein belongs to the protein kinase superfamily. STE Ser/Thr protein kinase family. MAP kinase kinase subfamily. Post-translationally, phosphorylation on Ser/Thr by MAP kinase kinase kinases (RAF) positively regulates the kinase activity.

The enzyme catalyses L-seryl-[protein] + ATP = O-phospho-L-seryl-[protein] + ADP + H(+). It catalyses the reaction L-threonyl-[protein] + ATP = O-phospho-L-threonyl-[protein] + ADP + H(+). It carries out the reaction L-tyrosyl-[protein] + ATP = O-phospho-L-tyrosyl-[protein] + ADP + H(+). In terms of biological role, catalyzes the concomitant phosphorylation of a threonine and a tyrosine residue in a Thr-Glu-Tyr sequence located in MAP kinases. The sequence is that of Dual specificity mitogen-activated protein kinase kinase 2 (map2k2) from Cyprinus carpio (Common carp).